A 665-amino-acid polypeptide reads, in one-letter code: MVSTTLATITIMSTLVGYTTGPLTDYMWLLIVGFIIAFVLAFSVGANDVANSFGTAVGSGVVTLRQACILASIFETLGSVLLGAKVSETIRKGIIDVTMYKDIEHVLMAGSVSAMFGSAVWQLAASFLKLPISGTHCIVGATIGFSLVAKGQQGVKWLELLRIVASWFLSPLLSGVMSAVLFYFVRMFILQKKDPVPNGLRALPFFYAVTMGINLFSIMFTGAPMLGFDKLPWWGVLLISIGFGIITALIVWFAVCPRLKKKIECEVKSSSPSESPLMEKRELHEAHSPILKPVPEESSVLSSSTPTTPPLPPPEERRVTFDIGDSDDADQKDCKESDLGGAPKTAHVHFTNGPAHIPSNGYSQYHTVHKDSGLYKDLLHKLHLAKVGDCMGEGGDRPIRRNNSYTSYTMAIIGMHGDFKPKESEFRASEDGDKEKAGAQERKRIRMDSYTSYCNAVAENGTPEDLGEGEVTLEMVDEDAGSSRSSLEEDRTDADKPEVSMLFQFLQILTACFGSFAHGGNDVSNAIGPLVALWLVYESGSVISSAPTPIWLLLYGGVGICVGLWVWGRRVIQTMGRDLTPITPSSGFSIELASAVTVVVASNIGLPVSTTHCKVGSVVAVGWLRSRKAVDWRLFRNIFMAWFVTVPISGLISAAIMALFNYVIL.

6 helical membrane-spanning segments follow: residues 26 to 46 (YMWL…SVGA), 67 to 87 (ACIL…AKVS), 107 to 127 (LMAG…AASF), 163 to 183 (IVAS…VLFY), 202 to 222 (ALPF…MFTG), and 235 to 255 (GVLL…WFAV). Disordered regions lie at residues 294-345 (VPEE…APKT) and 423-442 (ESEF…AQER). Residues 296–306 (EESSVLSSSTP) are compositionally biased toward low complexity. Residues 329–338 (ADQKDCKESD) are compositionally biased toward basic and acidic residues. Transmembrane regions (helical) follow at residues 499–519 (VSML…FAHG), 548–568 (TPIW…WVWG), 588–608 (FSIE…GLPV), and 638–658 (IFMA…AIMA).

Belongs to the inorganic phosphate transporter (PiT) (TC 2.A.20) family.

Its subcellular location is the membrane. In terms of biological role, sodium-phosphate symporter which plays a fundamental housekeeping role in phosphate transport. This chain is Sodium-dependent phosphate transporter 1-B (slc20a1b), found in Danio rerio (Zebrafish).